We begin with the raw amino-acid sequence, 390 residues long: Chalcone synthase (390 aa).

Residue cysteine 164 is part of the active site.

Belongs to the thiolase-like superfamily. Chalcone/stilbene synthases family.

It catalyses the reaction (E)-4-coumaroyl-CoA + 3 malonyl-CoA + 3 H(+) = 2',4,4',6'-tetrahydroxychalcone + 3 CO2 + 4 CoA. It functions in the pathway secondary metabolite biosynthesis; flavonoid biosynthesis. Its function is as follows. The primary product of this enzyme is 4,2',4',6'-tetrahydroxychalcone (also termed naringenin-chalcone or chalcone) which can under specific conditions spontaneously isomerize into naringenin. The sequence is that of Chalcone synthase (CHS) from Antirrhinum majus (Garden snapdragon).